The sequence spans 431 residues: Enolase (431 aa).

Residue Gln-167 coordinates (2R)-2-phosphoglycerate. The active-site Proton donor is the Glu-209. Mg(2+) is bound by residues Asp-246, Glu-290, and Asp-317. Residues Lys-342, Arg-371, Ser-372, and Lys-393 each contribute to the (2R)-2-phosphoglycerate site. Residue Lys-342 is the Proton acceptor of the active site.

This sequence belongs to the enolase family. As to quaternary structure, component of the RNA degradosome, a multiprotein complex involved in RNA processing and mRNA degradation. The cofactor is Mg(2+).

Its subcellular location is the cytoplasm. It is found in the secreted. The protein resides in the cell surface. It catalyses the reaction (2R)-2-phosphoglycerate = phosphoenolpyruvate + H2O. It functions in the pathway carbohydrate degradation; glycolysis; pyruvate from D-glyceraldehyde 3-phosphate: step 4/5. Functionally, catalyzes the reversible conversion of 2-phosphoglycerate (2-PG) into phosphoenolpyruvate (PEP). It is essential for the degradation of carbohydrates via glycolysis. The sequence is that of Enolase from Serratia proteamaculans (strain 568).